Here is a 152-residue protein sequence, read N- to C-terminus: MAEEPKGVPLSELSLQQLGELQKNCEQELNFFQESFNALKGLLTRNEKSISALDDVKIATAGHTALIPLSESLYIRAELSDPSKHLVEIGTGYFVELDREKAKAIFDRKKEHITKQVETVEGILKEKRRTRAYISDAFQTKVQSQLATMNTQ.

The protein belongs to the prefoldin subunit alpha family. As to quaternary structure, heterohexamer of two PFD-alpha type and four PFD-beta type subunits.

Functionally, binds specifically to cytosolic chaperonin (c-CPN) and transfers target proteins to it. Binds to nascent polypeptide chain and promotes folding in an environment in which there are many competing pathways for nonnative proteins. This is Probable prefoldin subunit 5 (pfd-5) from Caenorhabditis elegans.